Consider the following 203-residue polypeptide: Small ribosomal subunit protein uS7 (203 aa).

Residues 1-22 (MSESEAPEPDQPAGAEEATGAK) form a disordered region.

The protein belongs to the universal ribosomal protein uS7 family. As to quaternary structure, part of the 30S ribosomal subunit.

One of the primary rRNA binding proteins, it binds directly to 16S rRNA where it nucleates assembly of the head domain of the 30S subunit. Is located at the subunit interface close to the decoding center. This chain is Small ribosomal subunit protein uS7, found in Halococcus morrhuae (Micrococcus morrhuae).